Here is a 604-residue protein sequence, read N- to C-terminus: Rhotekin-2 (604 aa).

The REM-1 domain maps to 1–74 (MEGQLLRGLA…LQKSKEEIAN (74 aa)). Residues 53–79 (VCSARIQAYTAELQKSKEEIANQTGAR) adopt a coiled-coil conformation. One can recognise a PH domain in the interval 281-387 (ADAFAGFLNE…WMGAFRQHFF (107 aa)). The segment at 481-590 (LSPIGEPAPD…PVPVPRQKSI (110 aa)) is disordered. A compositionally biased stretch (polar residues) spans 514-527 (GRANQSKDSATQAG). Residues 529 to 543 (SGASSSPSDPRLSPP) are compositionally biased toward low complexity.

May play an important role in lymphopoiesis. The chain is Rhotekin-2 (Rtkn2) from Mus musculus (Mouse).